A 340-amino-acid chain; its full sequence is Uroporphyrinogen decarboxylase (340 aa).

Substrate-binding positions include 23–27 (RQAGR), D72, Y147, T202, and H316.

Belongs to the uroporphyrinogen decarboxylase family. As to quaternary structure, homodimer.

It localises to the cytoplasm. It catalyses the reaction uroporphyrinogen III + 4 H(+) = coproporphyrinogen III + 4 CO2. The protein operates within porphyrin-containing compound metabolism; protoporphyrin-IX biosynthesis; coproporphyrinogen-III from 5-aminolevulinate: step 4/4. Its function is as follows. Catalyzes the decarboxylation of four acetate groups of uroporphyrinogen-III to yield coproporphyrinogen-III. This is Uroporphyrinogen decarboxylase from Trichlorobacter lovleyi (strain ATCC BAA-1151 / DSM 17278 / SZ) (Geobacter lovleyi).